We begin with the raw amino-acid sequence, 258 residues long: Ubiquinone/menaquinone biosynthesis C-methyltransferase UbiE (258 aa).

The tract at residues 1–21 (MSESRTSADGGMETSYGFREV) is disordered. Residues Thr81, Asp102, and 130–131 (NA) each bind S-adenosyl-L-methionine.

It belongs to the class I-like SAM-binding methyltransferase superfamily. MenG/UbiE family.

The enzyme catalyses a 2-demethylmenaquinol + S-adenosyl-L-methionine = a menaquinol + S-adenosyl-L-homocysteine + H(+). It catalyses the reaction a 2-methoxy-6-(all-trans-polyprenyl)benzene-1,4-diol + S-adenosyl-L-methionine = a 5-methoxy-2-methyl-3-(all-trans-polyprenyl)benzene-1,4-diol + S-adenosyl-L-homocysteine + H(+). It functions in the pathway quinol/quinone metabolism; menaquinone biosynthesis; menaquinol from 1,4-dihydroxy-2-naphthoate: step 2/2. The protein operates within cofactor biosynthesis; ubiquinone biosynthesis. Functionally, methyltransferase required for the conversion of demethylmenaquinol (DMKH2) to menaquinol (MKH2) and the conversion of 2-polyprenyl-6-methoxy-1,4-benzoquinol (DDMQH2) to 2-polyprenyl-3-methyl-6-methoxy-1,4-benzoquinol (DMQH2). The sequence is that of Ubiquinone/menaquinone biosynthesis C-methyltransferase UbiE from Rhizobium johnstonii (strain DSM 114642 / LMG 32736 / 3841) (Rhizobium leguminosarum bv. viciae).